Reading from the N-terminus, the 465-residue chain is Gamma-aminobutyric acid receptor subunit gamma-1 (465 aa).

The first 20 residues, 1 to 20, serve as a signal peptide directing secretion; the sequence is MGSGKAFLFSPSLLWSQTRG. Residues 21-273 are Extracellular-facing; sequence VRLIFLLLTL…FDLSRRMGYF (253 aa). N-linked (GlcNAc...) asparagine glycosylation is found at N50 and N127. C188 and C202 are disulfide-bonded. The N-linked (GlcNAc...) asparagine glycan is linked to N245. Residues 274-294 form a helical membrane-spanning segment; it reads TIQTYIPCILTVVLSWVSFWI. Residues 295 to 300 are Cytoplasmic-facing; the sequence is NKDAVP. The helical transmembrane segment at 301-320 threads the bilayer; that stretch reads ARTSLGITTVLTMTTLSTIA. Residues 321-328 are Extracellular-facing; the sequence is RKSLPKVS. A helical transmembrane segment spans residues 329-349; it reads YVTAMDLFVSVCFIFVFAALM. Residues 350 to 444 lie on the Cytoplasmic side of the membrane; sequence EYGTLHYFTS…RIAKIDSYSR (95 aa). The helical transmembrane segment at 445-465 threads the bilayer; the sequence is IFFPTAFALFNLVYWVGYLYL.

Belongs to the ligand-gated ion channel (TC 1.A.9) family. Gamma-aminobutyric acid receptor (TC 1.A.9.5) subfamily. GABRG1 sub-subfamily. As to quaternary structure, heteropentamer, formed by a combination of alpha (GABRA1-6), beta (GABRB1-3), gamma (GABRG1-3), delta (GABRD), epsilon (GABRE), rho (GABRR1-3), pi (GABRP) and theta (GABRQ) chains, each subunit exhibiting distinct physiological and pharmacological properties. May be palmitoylated. As to expression, expressed in brain.

It localises to the postsynaptic cell membrane. It is found in the cell membrane. The catalysed reaction is chloride(in) = chloride(out). Functionally, gamma subunit of the heteropentameric ligand-gated chloride channel gated by gamma-aminobutyric acid (GABA), a major inhibitory neurotransmitter in the brain. GABA-gated chloride channels, also named GABA(A) receptors (GABAAR), consist of five subunits arranged around a central pore and contain GABA active binding site(s) located at the alpha and beta subunit interface(s). When activated by GABA, GABAARs selectively allow the flow of chloride anions across the cell membrane down their electrochemical gradient. Chloride influx into the postsynaptic neuron following GABAAR opening decreases the neuron ability to generate a new action potential, thereby reducing nerve transmission. In Mus musculus (Mouse), this protein is Gamma-aminobutyric acid receptor subunit gamma-1.